A 548-amino-acid polypeptide reads, in one-letter code: Natural resistance-associated macrophage protein 1 (548 aa).

Residues 1–38 are disordered; sequence MPGDMGPPKQGGTRYGSISSPPSPGPQQAPPGGTYLSE. At 1–55 the chain is on the cytoplasmic side; it reads MPGDMGPPKQGGTRYGSISSPPSPGPQQAPPGGTYLSEKIPIPDTESGAFSLRKL. The chain crosses the membrane as a helical span at residues 56–73; that stretch reads WAFTGPGFLMSIAFLDPG. The Extracellular segment spans residues 74 to 82; that stretch reads NIESDLQAG. The chain crosses the membrane as a helical span at residues 83 to 102; the sequence is AVAGFKLLWVLLWATVLGLL. The Cytoplasmic segment spans residues 103–139; that stretch reads CQRLAARLGVVTGKDLGEVCHLYYPKVPRILLWLTIE. Residues 140–160 traverse the membrane as a helical segment; it reads LAIVGSDMQEVIGTAIAFSLL. At 161–164 the chain is on the extracellular side; that stretch reads SAGR. Residues 165–184 form a helical membrane-spanning segment; the sequence is IPLWGGVLITIVDTFFFLFL. The Cytoplasmic portion of the chain corresponds to 185-193; that stretch reads DNYGLRKLE. The chain crosses the membrane as a helical span at residues 194 to 214; the sequence is AFFGFLITIMALTFGYEYVVA. The Extracellular portion of the chain corresponds to 215 to 237; that stretch reads RPAQGALLQGLFLPSCAGCGQPE. Residues 238–256 form a helical membrane-spanning segment; it reads LLQAVGIVGAIIMPHNIYL. Residues 257-284 are Cytoplasmic-facing; sequence HSSLVKSREVDRSRRADIREANMYFLIE. A helical membrane pass occupies residues 285–304; it reads ATIALSVSFLINLFVMAVFG. The Extracellular segment spans residues 305-346; sequence QAFYKQTNQAAFNICANSSLHDYATIFPRNNLTVAVDIYQGG. N-linked (GlcNAc...) asparagine glycosylation is found at Asn321 and Asn335. A helical transmembrane segment spans residues 347-366; the sequence is VILGCLFGPAALYIWAVGLL. At 367 to 397 the chain is on the cytoplasmic side; sequence AAGQSSTMTGTYAGQFVMEGFLKLRWSRFAR. A helical transmembrane segment spans residues 398–415; that stretch reads VLLTRSCAILPTVLVAVF. The Extracellular portion of the chain corresponds to 416–426; it reads RDLRDLSGLND. A helical membrane pass occupies residues 427–447; sequence LLNVLQSLLLPFAVLPILTFT. The Cytoplasmic segment spans residues 448-463; that stretch reads SMPAVMQEFANGLVSK. A helical membrane pass occupies residues 464-485; that stretch reads VISSSIMVLVCAVNLYFVISYV. Residues 486–493 lie on the Extracellular side of the membrane; it reads PSLPHPDY. Residues 494 to 513 form a helical membrane-spanning segment; that stretch reads FSLVALLAAAYLGLTTYLVW. Topologically, residues 514-548 are cytoplasmic; that stretch reads TCLITQGATLLAHSSHQRFLYGLPEEDQENGRTSG.

It belongs to the NRAMP family.

It localises to the late endosome membrane. It is found in the lysosome membrane. The enzyme catalyses Zn(2+)(in) + H(+)(out) = Zn(2+)(out) + H(+)(in). It carries out the reaction Fe(2+)(in) + H(+)(out) = Fe(2+)(out) + H(+)(in). It catalyses the reaction Mn(2+)(in) + H(+)(out) = Mn(2+)(out) + H(+)(in). Functionally, macrophage-specific antiporter that fluxes metal ions in either direction against a proton gradient. Localized to late endosomal lysosomal membranes, delivers bivalent cations from the cytosol into these acidic compartments where they may directly affect antimicrobial activity. Involved in iron metabolism and host natural resistance to infection with intracellular parasites. Pathogen resistance involves sequestration of Fe(2+) and Mn(2+), cofactors of both prokaryotic and eukaryotic catalases and superoxide dismutases, not only to protect the macrophage against its own generation of reactive oxygen species, but to deny the cations to the pathogen for synthesis of its protective enzymes. The chain is Natural resistance-associated macrophage protein 1 (SLC11A1) from Cervus elaphus (Red deer).